A 612-amino-acid chain; its full sequence is Cyclin-dependent kinase G1 (612 aa).

Positions 26–54 (SRDVYVRQSGRDDERRQIKRPSDHDLRRN) are enriched in basic and acidic residues. Disordered stretches follow at residues 26-60 (SRDVYVRQSGRDDERRQIKRPSDHDLRRNDGRHRS) and 239-278 (CYSSGSGSGHLSVEKLSADGNSGREYYSSDHDELEHEDQD). Residues 297–593 (FQKLNKINEG…VEDALNHGWF (297 aa)) form the Protein kinase domain. ATP is bound by residues 303–311 (INEGTYGIV) and Lys326. The residue at position 308 (Tyr308) is a Phosphotyrosine. Asp426 functions as the Proton acceptor in the catalytic mechanism. Residue Ser453 is modified to Phosphoserine. Position 459 is a phosphothreonine (Thr459).

This sequence belongs to the protein kinase superfamily. Ser/Thr protein kinase family. Forms a complex with CYCL1-1. Associated with the spliceosome. Interacts with RS2Z33. In terms of tissue distribution, expressed in leaves and inflorescences. Lower levels of expression in roots and stems.

Its subcellular location is the nucleus speckle. The catalysed reaction is L-seryl-[protein] + ATP = O-phospho-L-seryl-[protein] + ADP + H(+). It catalyses the reaction L-threonyl-[protein] + ATP = O-phospho-L-threonyl-[protein] + ADP + H(+). Functionally, cyclin-dependent kinase involved in pre-mRNA splicing. Required for the correct splicing of the sixth intron of CALS5 pre-mRNA. May stabilize the binding of U1 snRNP to this rare type of intron with a GC 5'SS. Involved in chromosome pairing and is required for the completion of synapsis in male meiocytes at high ambient temperatures. The chain is Cyclin-dependent kinase G1 (CDKG1) from Arabidopsis thaliana (Mouse-ear cress).